The chain runs to 244 residues: Orotidine 5'-phosphate decarboxylase (244 aa).

Substrate is bound by residues D12, K34, 61-70, T125, R187, Q196, G216, and R217; that span reads DLKLFDIPNT. K63 functions as the Proton donor in the catalytic mechanism.

It belongs to the OMP decarboxylase family. Type 1 subfamily. As to quaternary structure, homodimer.

The enzyme catalyses orotidine 5'-phosphate + H(+) = UMP + CO2. Its pathway is pyrimidine metabolism; UMP biosynthesis via de novo pathway; UMP from orotate: step 2/2. Its function is as follows. Catalyzes the decarboxylation of orotidine 5'-monophosphate (OMP) to uridine 5'-monophosphate (UMP). The chain is Orotidine 5'-phosphate decarboxylase from Dictyoglomus turgidum (strain DSM 6724 / Z-1310).